The sequence spans 399 residues: 5'-C-glycyluridine monooxygenase-decarboxylase (399 aa).

T179 contributes to the phosphate binding site. K230 bears the N6-(pyridoxal phosphate)lysine mark. Residues R318, R322, R353, and R367 each coordinate phosphate.

Belongs to the SelA family. Homooctamer; tetramer of homodimers. Pyridoxal 5'-phosphate is required as a cofactor.

The enzyme catalyses (5'S,6'R)-C-glycyluridine + O2 = uridine-5'-carboxamide + CO2 + H2O. The protein operates within antibiotic biosynthesis. Activity is dependent on phosphate. Functionally, monooxygenase-decarboxylase involved in the biosynthesis of the capuramycin-type nucleoside antibiotic A-503083. Catalyzes the oxidative decarboxylation of 5'-C-glycyluridine (GlyU) to uridine-5'-carboxamide (CarU). Is stereospecific for the (5'S,6'R)-diastereomer of GlyU. Directly incorporates a single oxygen atom from O(2) into the product CarU. This Streptomyces sp protein is 5'-C-glycyluridine monooxygenase-decarboxylase.